Reading from the N-terminus, the 407-residue chain is Arginine biosynthesis bifunctional protein ArgJ (407 aa).

Residues Thr155, Lys181, Thr192, Glu278, Asn402, and Thr407 each coordinate substrate. Catalysis depends on Thr192, which acts as the Nucleophile.

Belongs to the ArgJ family. As to quaternary structure, heterotetramer of two alpha and two beta chains.

The protein localises to the cytoplasm. The catalysed reaction is N(2)-acetyl-L-ornithine + L-glutamate = N-acetyl-L-glutamate + L-ornithine. The enzyme catalyses L-glutamate + acetyl-CoA = N-acetyl-L-glutamate + CoA + H(+). It functions in the pathway amino-acid biosynthesis; L-arginine biosynthesis; L-ornithine and N-acetyl-L-glutamate from L-glutamate and N(2)-acetyl-L-ornithine (cyclic): step 1/1. Its pathway is amino-acid biosynthesis; L-arginine biosynthesis; N(2)-acetyl-L-ornithine from L-glutamate: step 1/4. Catalyzes two activities which are involved in the cyclic version of arginine biosynthesis: the synthesis of N-acetylglutamate from glutamate and acetyl-CoA as the acetyl donor, and of ornithine by transacetylation between N(2)-acetylornithine and glutamate. The protein is Arginine biosynthesis bifunctional protein ArgJ of Thiobacillus denitrificans (strain ATCC 25259 / T1).